Reading from the N-terminus, the 247-residue chain is Ribosomal RNA large subunit methyltransferase E (247 aa).

Residues 1-21 are disordered; the sequence is MKVNPKNSPKDNLKDSPKVSA. Basic and acidic residues predominate over residues 8 to 17; it reads SPKDNLKDSP. Gly-80, Trp-82, Asp-108, Asp-124, and Asp-153 together coordinate S-adenosyl-L-methionine. Lys-193 (proton acceptor) is an active-site residue.

This sequence belongs to the class I-like SAM-binding methyltransferase superfamily. RNA methyltransferase RlmE family.

It localises to the cytoplasm. It catalyses the reaction uridine(2552) in 23S rRNA + S-adenosyl-L-methionine = 2'-O-methyluridine(2552) in 23S rRNA + S-adenosyl-L-homocysteine + H(+). Its function is as follows. Specifically methylates the uridine in position 2552 of 23S rRNA at the 2'-O position of the ribose in the fully assembled 50S ribosomal subunit. In Polaromonas sp. (strain JS666 / ATCC BAA-500), this protein is Ribosomal RNA large subunit methyltransferase E.